We begin with the raw amino-acid sequence, 550 residues long: Arginine--tRNA ligase (550 aa).

A 'HIGH' region motif is present at residues A130–G140.

Belongs to the class-I aminoacyl-tRNA synthetase family. Monomer.

It is found in the cytoplasm. It carries out the reaction tRNA(Arg) + L-arginine + ATP = L-arginyl-tRNA(Arg) + AMP + diphosphate. The polypeptide is Arginine--tRNA ligase (Mycolicibacterium paratuberculosis (strain ATCC BAA-968 / K-10) (Mycobacterium paratuberculosis)).